Consider the following 182-residue polypeptide: Oligoribonuclease (182 aa).

The Exonuclease domain occupies 8–171; it reads LIWIDLEMTG…DDIRESIKEL (164 aa). The active site involves Tyr129.

This sequence belongs to the oligoribonuclease family.

The protein localises to the cytoplasm. Functionally, 3'-to-5' exoribonuclease specific for small oligoribonucleotides. The protein is Oligoribonuclease (orn) of Haemophilus influenzae (strain ATCC 51907 / DSM 11121 / KW20 / Rd).